We begin with the raw amino-acid sequence, 353 residues long: UDP-N-acetylenolpyruvoylglucosamine reductase (353 aa).

The FAD-binding PCMH-type domain occupies 31–201; it reads LASHAPAFVA…GSVRFALPRP (171 aa). The active site involves Arg177. Ser250 serves as the catalytic Proton donor. Residue Glu346 is part of the active site.

The protein belongs to the MurB family. FAD is required as a cofactor.

The protein resides in the cytoplasm. The enzyme catalyses UDP-N-acetyl-alpha-D-muramate + NADP(+) = UDP-N-acetyl-3-O-(1-carboxyvinyl)-alpha-D-glucosamine + NADPH + H(+). It functions in the pathway cell wall biogenesis; peptidoglycan biosynthesis. Cell wall formation. In Bordetella parapertussis (strain 12822 / ATCC BAA-587 / NCTC 13253), this protein is UDP-N-acetylenolpyruvoylglucosamine reductase.